A 344-amino-acid polypeptide reads, in one-letter code: Thioredoxin reductase FGSG_00043 (344 aa).

FAD is bound by residues 12-15 (GGPA), 34-39 (DSVSYR), H51, and A121. An intrachain disulfide couples C165 to C168. FAD-binding positions include D314 and 321–322 (FV).

This sequence belongs to the class-II pyridine nucleotide-disulfide oxidoreductase family. In terms of assembly, homodimer. FAD serves as cofactor.

It participates in mycotoxin biosynthesis. Functionally, thioredoxin reductase; part of the gene cluster that mediates the biosynthesis of gramillins A and B, bicyclic lipopeptides that induce cell death in maize leaves but not in wheat leaves. The nonribosomal peptide synthetase GRA1 incorporates respectively a glutamic adic (Glu), a leucine (Leu), a serine (Ser), a hydroxyglutamine (HOGln), a 2-amino decanoic acid, and 2 cysteins (CysB and CysA). The biosynthesis of 2-amino decanoic acid incorporated in gramillins could be initiated by a fatty acid synthase composed of the alpha and beta subunits FGSG_00036 and FGSG_11656. The cytochrome P450 monooxygenase FGSG_15680 could hydroxylate the fatty acid chain. Subsequent oxidation to the ketone by the oxidoreductase FGSG_00048 and transamination by aminotransferase FGSG_00049 could form 2-amino-decanoic acid. On the other hand, FGSG_15680 could also be responsible for the HO-modified glutamine at the gamma-position. Whether hydroxylation occurs on the fully assembled product or on the Gln residue prior to assembly into the gramillins requires further proof. The thioredoxin FGSG_00043 could also be required for the disulfide-bond formation between CysA and CysB. The specific involvement of the remaining proteins from the cluster is more difficult to discern, but could have broader regulatory (FGSG_00040 and FGSG_11657) or enzymatic functions (FGSG_00044 and FGSG_00045). The final C-domain of GRA1 does not possess the expected sequence of a termination CT domain, often implicated in macrocyclization and release of a cyclopeptidein fungal NRPs; and the thioesterase FGSG_00047 may act in concert with the terminal C-domain of GRA1 to catalyze the formation of the macrocyclic anhydride and release of the products. This is Thioredoxin reductase FGSG_00043 from Gibberella zeae (strain ATCC MYA-4620 / CBS 123657 / FGSC 9075 / NRRL 31084 / PH-1) (Wheat head blight fungus).